We begin with the raw amino-acid sequence, 489 residues long: Potassium voltage-gated channel subfamily A member 7 (489 aa).

A helical transmembrane segment spans residues Val-176–Thr-196. Residue Asn-224 is glycosylated (N-linked (GlcNAc...) asparagine). A helical membrane pass occupies residues Phe-242 to Val-262. Cys-264 carries S-palmitoyl cysteine lipidation. Residues Val-274–Leu-294 form a helical membrane-spanning segment. A helical; Voltage-sensor membrane pass occupies residues Ile-309–Ser-328. A helical membrane pass occupies residues Leu-345 to Phe-365. The Selectivity filter signature appears at Thr-391–Asp-396. Residues Ile-406 to Ile-426 form a helical membrane-spanning segment.

It belongs to the potassium channel family. A (Shaker) (TC 1.A.1.2) subfamily. Kv1.7/KCNA7 sub-subfamily. In terms of assembly, heterotetramer of potassium channel proteins. As to expression, detected in heart, skeletal muscle, brain, and pancreatic islet cells.

The protein resides in the membrane. The enzyme catalyses K(+)(in) = K(+)(out). Mediates the voltage-dependent potassium ion permeability of excitable membranes. Assuming opened or closed conformations in response to the voltage difference across the membrane, the protein forms a potassium-selective channel through which potassium ions may pass in accordance with their electrochemical gradient. Channels formed by isoform 1 inactivate faster than channels formed by isoform 2. The sequence is that of Potassium voltage-gated channel subfamily A member 7 (Kcna7) from Mus musculus (Mouse).